We begin with the raw amino-acid sequence, 310 residues long: Methionyl-tRNA formyltransferase (310 aa).

109-112 (SLLP) contacts (6S)-5,6,7,8-tetrahydrofolate.

Belongs to the Fmt family.

It carries out the reaction L-methionyl-tRNA(fMet) + (6R)-10-formyltetrahydrofolate = N-formyl-L-methionyl-tRNA(fMet) + (6S)-5,6,7,8-tetrahydrofolate + H(+). In terms of biological role, attaches a formyl group to the free amino group of methionyl-tRNA(fMet). The formyl group appears to play a dual role in the initiator identity of N-formylmethionyl-tRNA by promoting its recognition by IF2 and preventing the misappropriation of this tRNA by the elongation apparatus. The chain is Methionyl-tRNA formyltransferase from Pseudomonas entomophila (strain L48).